The sequence spans 754 residues: NAD(P)H-quinone oxidoreductase subunit 5, chloroplastic (754 aa).

16 helical membrane passes run 8–28 (FWII…GLLL), 40–60 (WVFP…YLAI), 89–109 (VDPL…LVLI), 125–145 (FAYM…SNLI), 147–167 (IYFF…FWFT), 185–205 (GDFG…SLEF), 219–239 (NEVN…GAIA), 258–278 (TPIS…FLGA), 280–300 (LLPL…LGII), 327–347 (LGYM…FHLI), 354–374 (ALLF…VGYS), 396–416 (TSFL…CFWS), 425–445 (WLYS…TAFY), 552–572 (FSML…IPFF), 608–628 (FITN…IASF), and 733–753 (LVYI…VLFF).

Belongs to the complex I subunit 5 family. NDH is composed of at least 16 different subunits, 5 of which are encoded in the nucleus.

The protein localises to the plastid. The protein resides in the chloroplast thylakoid membrane. It catalyses the reaction a plastoquinone + NADH + (n+1) H(+)(in) = a plastoquinol + NAD(+) + n H(+)(out). The catalysed reaction is a plastoquinone + NADPH + (n+1) H(+)(in) = a plastoquinol + NADP(+) + n H(+)(out). Its function is as follows. NDH shuttles electrons from NAD(P)H:plastoquinone, via FMN and iron-sulfur (Fe-S) centers, to quinones in the photosynthetic chain and possibly in a chloroplast respiratory chain. The immediate electron acceptor for the enzyme in this species is believed to be plastoquinone. Couples the redox reaction to proton translocation, and thus conserves the redox energy in a proton gradient. The polypeptide is NAD(P)H-quinone oxidoreductase subunit 5, chloroplastic (ndhF) (Morus indica (Mulberry)).